Consider the following 279-residue polypeptide: Large ribosomal subunit protein uL24m (279 aa).

The N-terminal 31 residues, 1-31 (MRDLRKLIPRLRGPGTNVLKMKKPLPLHMRT), are a transit peptide targeting the mitochondrion. Over residues 34–51 (REHLNKSDPTVKDDKSAK) the composition is skewed to basic and acidic residues. The interval 34–56 (REHLNKSDPTVKDDKSAKPELPF) is disordered. Positions 70-100 (KGDYVYVHQGPLKGKWGRVVETNKYTNGITI) constitute a KOW domain. The tract at residues 185–204 (PRPKTEDKPKDPEGKLDTKN) is disordered. Residues 187–202 (PKTEDKPKDPEGKLDT) are compositionally biased toward basic and acidic residues.

The protein belongs to the universal ribosomal protein uL24 family. Component of the mitochondrial large ribosomal subunit (mt-LSU). Mature yeast 74S mitochondrial ribosomes consist of a small (37S) and a large (54S) subunit. The 37S small subunit contains a 15S ribosomal RNA (15S mt-rRNA) and at least 32 different proteins. The 54S large subunit contains a 21S rRNA (21S mt-rRNA) and at least 45 different proteins. uL24m forms the wall of the exit tunnel.

It localises to the mitochondrion. Its function is as follows. Component of the mitochondrial ribosome (mitoribosome), a dedicated translation machinery responsible for the synthesis of mitochondrial genome-encoded proteins, including at least some of the essential transmembrane subunits of the mitochondrial respiratory chain. The mitoribosomes are attached to the mitochondrial inner membrane and translation products are cotranslationally integrated into the membrane. This Schizosaccharomyces pombe (strain 972 / ATCC 24843) (Fission yeast) protein is Large ribosomal subunit protein uL24m (mrpl40).